The primary structure comprises 351 residues: Dihydroorotate dehydrogenase (quinone) (351 aa).

Residues 61–65 (AGLDK) and threonine 85 contribute to the FMN site. Lysine 65 contributes to the substrate binding site. Residue 110 to 114 (NRMGF) coordinates substrate. FMN-binding residues include asparagine 139 and asparagine 172. Substrate is bound at residue asparagine 172. The active-site Nucleophile is serine 175. Asparagine 177 lines the substrate pocket. Residues lysine 217 and threonine 245 each coordinate FMN. Position 246 to 247 (246 to 247 (NT)) interacts with substrate. FMN contacts are provided by residues glycine 268, glycine 297, and 318–319 (YS).

This sequence belongs to the dihydroorotate dehydrogenase family. Type 2 subfamily. As to quaternary structure, monomer. The cofactor is FMN.

It localises to the cell membrane. The enzyme catalyses (S)-dihydroorotate + a quinone = orotate + a quinol. The protein operates within pyrimidine metabolism; UMP biosynthesis via de novo pathway; orotate from (S)-dihydroorotate (quinone route): step 1/1. Catalyzes the conversion of dihydroorotate to orotate with quinone as electron acceptor. This is Dihydroorotate dehydrogenase (quinone) from Xanthomonas euvesicatoria pv. vesicatoria (strain 85-10) (Xanthomonas campestris pv. vesicatoria).